The following is a 313-amino-acid chain: Carbamate kinase 2 (313 aa).

This sequence belongs to the carbamate kinase family.

The protein localises to the cytoplasm. It catalyses the reaction hydrogencarbonate + NH4(+) + ATP = carbamoyl phosphate + ADP + H2O + H(+). The protein operates within metabolic intermediate metabolism; carbamoyl phosphate degradation; CO(2) and NH(3) from carbamoyl phosphate: step 1/1. The polypeptide is Carbamate kinase 2 (arcC2) (Staphylococcus aureus (strain Mu50 / ATCC 700699)).